Here is a 305-residue protein sequence, read N- to C-terminus: tRNA pseudouridine synthase B (305 aa).

Asp39 functions as the Nucleophile in the catalytic mechanism.

The protein belongs to the pseudouridine synthase TruB family. Type 1 subfamily.

The enzyme catalyses uridine(55) in tRNA = pseudouridine(55) in tRNA. Its function is as follows. Responsible for synthesis of pseudouridine from uracil-55 in the psi GC loop of transfer RNAs. The chain is tRNA pseudouridine synthase B from Staphylococcus aureus (strain Newman).